Reading from the N-terminus, the 634-residue chain is 1-deoxy-D-xylulose-5-phosphate synthase (634 aa).

Residues His73 and 114–116 (GHS) contribute to the thiamine diphosphate site. Residue Asp145 coordinates Mg(2+). Residues 146 to 147 (GA), Asn174, Tyr285, and Glu365 contribute to the thiamine diphosphate site. Position 174 (Asn174) interacts with Mg(2+).

Belongs to the transketolase family. DXPS subfamily. As to quaternary structure, homodimer. The cofactor is Mg(2+). Thiamine diphosphate serves as cofactor.

It catalyses the reaction D-glyceraldehyde 3-phosphate + pyruvate + H(+) = 1-deoxy-D-xylulose 5-phosphate + CO2. The protein operates within metabolic intermediate biosynthesis; 1-deoxy-D-xylulose 5-phosphate biosynthesis; 1-deoxy-D-xylulose 5-phosphate from D-glyceraldehyde 3-phosphate and pyruvate: step 1/1. Functionally, catalyzes the acyloin condensation reaction between C atoms 2 and 3 of pyruvate and glyceraldehyde 3-phosphate to yield 1-deoxy-D-xylulose-5-phosphate (DXP). The chain is 1-deoxy-D-xylulose-5-phosphate synthase from Desulforudis audaxviator (strain MP104C).